The primary structure comprises 66 residues: Ocellatin-PT4 (66 aa).

The N-terminal stretch at 1 to 22 is a signal peptide; sequence MAFLKKSLFLVLFLGLVSLSIC. Residues 23-39 constitute a propeptide that is removed on maturation; it reads DEEKRQDEDDDDDDDEE. Valine 66 carries the valine amide modification.

Expressed by the skin glands.

The protein resides in the secreted. Its function is as follows. Has antibacterial activity against Gram-negative bacteria E.coli ATCC 25922 (MIC=80 uM), K.pneumoniae ATCC 700603 (MIC=310 uM) and S.choleraesuis ATCC 14028 (MIC=310 uM). Shows no hemolytic activity and no cytotoxicity. This chain is Ocellatin-PT4, found in Leptodactylus pustulatus (Ceara white-lipped frog).